The chain runs to 1032 residues: Protein translocase subunit SecA (1032 aa).

ATP contacts are provided by residues Q121, 139–143 (GEGKT), and D570. The interval 945-975 (TAGGSENATEDAPKPAKRGVGGAARRVSNAA) is disordered. Residues C994, C996, C1005, and H1006 each contribute to the Zn(2+) site.

The protein belongs to the SecA family. As to quaternary structure, monomer and homodimer. Part of the essential Sec protein translocation apparatus which comprises SecA, SecYEG and auxiliary proteins SecDF. Other proteins may also be involved. Zn(2+) is required as a cofactor.

The protein resides in the cell membrane. The protein localises to the cytoplasm. It catalyses the reaction ATP + H2O + cellular proteinSide 1 = ADP + phosphate + cellular proteinSide 2.. Functionally, part of the Sec protein translocase complex. Interacts with the SecYEG preprotein conducting channel. Has a central role in coupling the hydrolysis of ATP to the transfer of proteins into and across the cell membrane, serving as an ATP-driven molecular motor driving the stepwise translocation of polypeptide chains across the membrane. In Herpetosiphon aurantiacus (strain ATCC 23779 / DSM 785 / 114-95), this protein is Protein translocase subunit SecA.